An 85-amino-acid polypeptide reads, in one-letter code: Small proline-rich protein 2D (85 aa).

Low complexity predominate over residues 1–11 (MSYQQQQCKQP). Residues 1-20 (MSYQQQQCKQPCQPPPVCPP) form a disordered region. 4 consecutive repeat copies span residues 21-29 (KKCPEPCPP), 30-38 (LKCPEPCPP), 39-47 (PKCPEPCPP), and 48-56 (PKCPEPCPE). Positions 21–56 (KKCPEPCPPLKCPEPCPPPKCPEPCPPPKCPEPCPE) are 4 X 9 AA approximate tandem repeats. The segment at 57–85 (PCPPPSCQQKCPPAQPPPPCQQKCPPKSK) is disordered.

This sequence belongs to the cornifin (SPRR) family. As to expression, expressed in uterus.

It localises to the cytoplasm. Cross-linked envelope protein of keratinocytes. It is a keratinocyte protein that first appears in the cell cytosol, but ultimately becomes cross-linked to membrane proteins by transglutaminase. All that results in the formation of an insoluble envelope beneath the plasma membrane. This chain is Small proline-rich protein 2D (Sprr2d), found in Mus musculus (Mouse).